A 601-amino-acid chain; its full sequence is Elongation factor 4 (601 aa).

In terms of domain architecture, tr-type G spans aspartate 7–lysine 189. GTP contacts are provided by residues aspartate 19–threonine 24 and asparagine 136–aspartate 139.

This sequence belongs to the TRAFAC class translation factor GTPase superfamily. Classic translation factor GTPase family. LepA subfamily.

It localises to the cell inner membrane. The catalysed reaction is GTP + H2O = GDP + phosphate + H(+). Its function is as follows. Required for accurate and efficient protein synthesis under certain stress conditions. May act as a fidelity factor of the translation reaction, by catalyzing a one-codon backward translocation of tRNAs on improperly translocated ribosomes. Back-translocation proceeds from a post-translocation (POST) complex to a pre-translocation (PRE) complex, thus giving elongation factor G a second chance to translocate the tRNAs correctly. Binds to ribosomes in a GTP-dependent manner. The protein is Elongation factor 4 of Methylorubrum populi (strain ATCC BAA-705 / NCIMB 13946 / BJ001) (Methylobacterium populi).